Consider the following 236-residue polypeptide: Glucosamine-6-phosphate deaminase (236 aa).

The active-site Proton acceptor; for enolization step is D62. N128 acts as the For ring-opening step in catalysis. Residue H130 is the Proton acceptor; for ring-opening step of the active site. E135 acts as the For ring-opening step in catalysis.

Belongs to the glucosamine/galactosamine-6-phosphate isomerase family. NagB subfamily.

The catalysed reaction is alpha-D-glucosamine 6-phosphate + H2O = beta-D-fructose 6-phosphate + NH4(+). The protein operates within amino-sugar metabolism; N-acetylneuraminate degradation; D-fructose 6-phosphate from N-acetylneuraminate: step 5/5. Catalyzes the reversible isomerization-deamination of glucosamine 6-phosphate (GlcN6P) to form fructose 6-phosphate (Fru6P) and ammonium ion. The sequence is that of Glucosamine-6-phosphate deaminase from Oenococcus oeni (strain ATCC BAA-331 / PSU-1).